The following is a 419-amino-acid chain: Gamma-glutamyl phosphate reductase (419 aa).

It belongs to the gamma-glutamyl phosphate reductase family.

It is found in the cytoplasm. The enzyme catalyses L-glutamate 5-semialdehyde + phosphate + NADP(+) = L-glutamyl 5-phosphate + NADPH + H(+). It participates in amino-acid biosynthesis; L-proline biosynthesis; L-glutamate 5-semialdehyde from L-glutamate: step 2/2. Functionally, catalyzes the NADPH-dependent reduction of L-glutamate 5-phosphate into L-glutamate 5-semialdehyde and phosphate. The product spontaneously undergoes cyclization to form 1-pyrroline-5-carboxylate. The chain is Gamma-glutamyl phosphate reductase from Caldicellulosiruptor saccharolyticus (strain ATCC 43494 / DSM 8903 / Tp8T 6331).